A 420-amino-acid polypeptide reads, in one-letter code: Imidazolonepropionase (420 aa).

Residues His77 and His79 each contribute to the Fe(3+) site. Zn(2+) contacts are provided by His77 and His79. The 4-imidazolone-5-propanoate site is built by Arg86, Tyr149, and His182. Residue Tyr149 coordinates N-formimidoyl-L-glutamate. His245 provides a ligand contact to Fe(3+). His245 is a Zn(2+) binding site. Residue Glu248 participates in 4-imidazolone-5-propanoate binding. Asp319 contributes to the Fe(3+) binding site. Asp319 contributes to the Zn(2+) binding site. Asn321 is an N-formimidoyl-L-glutamate binding site.

It belongs to the metallo-dependent hydrolases superfamily. HutI family. Zn(2+) is required as a cofactor. It depends on Fe(3+) as a cofactor.

The protein localises to the cytoplasm. The catalysed reaction is 4-imidazolone-5-propanoate + H2O = N-formimidoyl-L-glutamate. Its pathway is amino-acid degradation; L-histidine degradation into L-glutamate; N-formimidoyl-L-glutamate from L-histidine: step 3/3. Catalyzes the hydrolytic cleavage of the carbon-nitrogen bond in imidazolone-5-propanoate to yield N-formimidoyl-L-glutamate. It is the third step in the universal histidine degradation pathway. The chain is Imidazolonepropionase from Haloarcula marismortui (strain ATCC 43049 / DSM 3752 / JCM 8966 / VKM B-1809) (Halobacterium marismortui).